Reading from the N-terminus, the 119-residue chain is UPF0342 protein Athe_0692 (119 aa).

This sequence belongs to the UPF0342 family.

The sequence is that of UPF0342 protein Athe_0692 from Caldicellulosiruptor bescii (strain ATCC BAA-1888 / DSM 6725 / KCTC 15123 / Z-1320) (Anaerocellum thermophilum).